The chain runs to 395 residues: Elongation factor Tu (395 aa).

Residues 10 to 204 (KPHVNIGTIG…VVDEYIPTPV (195 aa)) form the tr-type G domain. The interval 19-26 (GHVDHGKT) is G1. 19–26 (GHVDHGKT) is a GTP binding site. Threonine 26 provides a ligand contact to Mg(2+). A G2 region spans residues 60 to 64 (GITIN). The segment at 81–84 (DAPG) is G3. Residues 81 to 85 (DAPGH) and 136 to 139 (NKTD) contribute to the GTP site. The G4 stretch occupies residues 136 to 139 (NKTD). The tract at residues 174–176 (SAL) is G5.

It belongs to the TRAFAC class translation factor GTPase superfamily. Classic translation factor GTPase family. EF-Tu/EF-1A subfamily. As to quaternary structure, monomer.

It localises to the cytoplasm. The catalysed reaction is GTP + H2O = GDP + phosphate + H(+). Its function is as follows. GTP hydrolase that promotes the GTP-dependent binding of aminoacyl-tRNA to the A-site of ribosomes during protein biosynthesis. The sequence is that of Elongation factor Tu from Lactiplantibacillus plantarum (strain ATCC BAA-793 / NCIMB 8826 / WCFS1) (Lactobacillus plantarum).